We begin with the raw amino-acid sequence, 84 residues long: Dolichol phosphate-mannose biosynthesis regulatory protein (84 aa).

Transmembrane regions (helical) follow at residues phenylalanine 11–leucine 31 and tyrosine 49–isoleucine 69.

Belongs to the DPM2 family. In terms of assembly, component of the dolichol-phosphate mannose (DPM) synthase complex composed of DPM1, DPM2 and DPM3; in the complex interacts directly with DPM3. Component of the glycosylphosphatidylinositol-N-acetylglucosaminyltransferase (GPI-GnT) complex composed at least by PIGA, PIGC, PIGH, PIGP, PIGQ, PIGY and DPM2. Interacts with PIGA, PIGC and PIGQ.

Its subcellular location is the endoplasmic reticulum membrane. Its pathway is protein modification; protein glycosylation. Regulates the biosynthesis of dolichol phosphate-mannose. Regulatory subunit of the dolichol-phosphate mannose (DPM) synthase complex; essential for the ER localization and stable expression of DPM1. Part of the glycosylphosphatidylinositol-N-acetylglucosaminyltransferase (GPI-GnT) complex that catalyzes the transfer of N-acetylglucosamine from UDP-N-acetylglucosamine to phosphatidylinositol and participates in the first step of GPI biosynthesis. May act by regulating the GPI-GNT complex. In Mus musculus (Mouse), this protein is Dolichol phosphate-mannose biosynthesis regulatory protein.